Here is a 154-residue protein sequence, read N- to C-terminus: D-aminoacyl-tRNA deacylase (154 aa).

Residues glycine 137 to proline 138 carry the Gly-cisPro motif, important for rejection of L-amino acids motif.

This sequence belongs to the DTD family. In terms of assembly, homodimer.

It localises to the cytoplasm. It catalyses the reaction glycyl-tRNA(Ala) + H2O = tRNA(Ala) + glycine + H(+). The catalysed reaction is a D-aminoacyl-tRNA + H2O = a tRNA + a D-alpha-amino acid + H(+). Its function is as follows. An aminoacyl-tRNA editing enzyme that deacylates mischarged D-aminoacyl-tRNAs. Also deacylates mischarged glycyl-tRNA(Ala), protecting cells against glycine mischarging by AlaRS. Acts via tRNA-based rather than protein-based catalysis; rejects L-amino acids rather than detecting D-amino acids in the active site. By recycling D-aminoacyl-tRNA to D-amino acids and free tRNA molecules, this enzyme counteracts the toxicity associated with the formation of D-aminoacyl-tRNA entities in vivo and helps enforce protein L-homochirality. In Thermomicrobium roseum (strain ATCC 27502 / DSM 5159 / P-2), this protein is D-aminoacyl-tRNA deacylase.